Reading from the N-terminus, the 98-residue chain is Large ribosomal subunit protein bL27 (98 aa).

The segment covering 1-11 has biased composition (polar residues); sequence MASKASGGSTR. Residues 1–20 are disordered; it reads MASKASGGSTRNGRDSISKR.

It belongs to the bacterial ribosomal protein bL27 family.

This chain is Large ribosomal subunit protein bL27, found in Aquifex aeolicus (strain VF5).